The primary structure comprises 284 residues: Deoxyribonuclease-1 (284 aa).

A signal peptide spans 1–22; the sequence is MRYTGLMGILLTLVNLLQLAAT. Asn-40 is a glycosylation site (N-linked (GlcNAc...) asparagine). Glu-100 is an active-site residue. A disulfide bond links Cys-123 and Cys-126. An N-linked (GlcNAc...) asparagine glycan is attached at Asn-128. His-156 is an active-site residue. Cysteines 195 and 231 form a disulfide.

Belongs to the DNase I family. Ca(2+) is required as a cofactor. Mg(2+) serves as cofactor.

It localises to the secreted. Its subcellular location is the zymogen granule. The protein resides in the nucleus envelope. It carries out the reaction Endonucleolytic cleavage to 5'-phosphodinucleotide and 5'-phosphooligonucleotide end-products.. Its function is as follows. Serum endocuclease secreted into body fluids by a wide variety of exocrine and endocrine organs. Expressed by non-hematopoietic tissues and preferentially cleaves protein-free DNA. Among other functions, seems to be involved in cell death by apoptosis. Binds specifically to G-actin and blocks actin polymerization. Together with DNASE1L3, plays a key role in degrading neutrophil extracellular traps (NETs). NETs are mainly composed of DNA fibers and are released by neutrophils to bind pathogens during inflammation. Degradation of intravascular NETs by DNASE1 and DNASE1L3 is required to prevent formation of clots that obstruct blood vessels and cause organ damage following inflammation. The polypeptide is Deoxyribonuclease-1 (Dnase1) (Rattus norvegicus (Rat)).